A 186-amino-acid polypeptide reads, in one-letter code: Nascent polypeptide-associated complex subunit beta (186 aa).

Residues G65–V130 enclose the NAC-A/B domain. Positions Q153 to E186 are disordered. The span at E167 to E186 shows a compositional bias: acidic residues.

Belongs to the NAC-beta family. In terms of assembly, part of the nascent polypeptide-associated complex (NAC), consisting of egd2 and egd1. NAC associates with ribosomes via egd1.

Its subcellular location is the cytoplasm. The protein localises to the nucleus. In terms of biological role, component of the nascent polypeptide-associated complex (NAC), a dynamic component of the ribosomal exit tunnel, protecting the emerging polypeptides from interaction with other cytoplasmic proteins to ensure appropriate nascent protein targeting. The NAC complex also promotes mitochondrial protein import by enhancing productive ribosome interactions with the outer mitochondrial membrane and blocks the inappropriate interaction of ribosomes translating non-secretory nascent polypeptides with translocation sites in the membrane of the endoplasmic reticulum. EGD1 may act as a transcription factor that exert a negative effect on the expression of several genes that are transcribed by RNA polymerase II. In Aspergillus fumigatus (strain ATCC MYA-4609 / CBS 101355 / FGSC A1100 / Af293) (Neosartorya fumigata), this protein is Nascent polypeptide-associated complex subunit beta (egd1).